Here is a 205-residue protein sequence, read N- to C-terminus: Alpha-1-acid glycoprotein (205 aa).

Positions methionine 1–alanine 18 are cleaved as a signal peptide. Asparagine 25, asparagine 34, asparagine 76, asparagine 94, asparagine 104, and asparagine 134 each carry an N-linked (GlcNAc...) asparagine glycan. Residues cysteine 91 and cysteine 183 are joined by a disulfide bond.

This sequence belongs to the calycin superfamily. Lipocalin family.

It localises to the secreted. Functionally, functions as a transport protein in the blood stream. Binds various ligands in the interior of its beta-barrel domain. Appears to function in modulating the activity of the immune system during the acute-phase reaction. The chain is Alpha-1-acid glycoprotein (Orm1) from Rattus norvegicus (Rat).